The primary structure comprises 86 residues: Small ribosomal subunit protein bS20 (86 aa).

The protein belongs to the bacterial ribosomal protein bS20 family.

Functionally, binds directly to 16S ribosomal RNA. This is Small ribosomal subunit protein bS20 from Mycolicibacterium vanbaalenii (strain DSM 7251 / JCM 13017 / BCRC 16820 / KCTC 9966 / NRRL B-24157 / PYR-1) (Mycobacterium vanbaalenii).